Here is a 227-residue protein sequence, read N- to C-terminus: Cytochrome c oxidase subunit 2 (227 aa).

Residues 1-14 lie on the Mitochondrial intermembrane side of the membrane; sequence MAYTFQLGLQDATS. The helical transmembrane segment at 15–45 threads the bilayer; it reads PIMEELTNFHDHTLMIVFLISSLVLYVISLM. Residues 46–59 are Mitochondrial matrix-facing; sequence LTTKLTHTNTMDAQ. A helical membrane pass occupies residues 60-87; the sequence is EVETIWTILPAVILILIALPSLRILYMM. Residues 88 to 227 are Mitochondrial intermembrane-facing; the sequence is DEINNPVLTV…HFENWSASMI (140 aa). 6 residues coordinate Cu cation: H161, C196, E198, C200, H204, and M207. E198 lines the Mg(2+) pocket.

Belongs to the cytochrome c oxidase subunit 2 family. In terms of assembly, component of the cytochrome c oxidase (complex IV, CIV), a multisubunit enzyme composed of 14 subunits. The complex is composed of a catalytic core of 3 subunits MT-CO1, MT-CO2 and MT-CO3, encoded in the mitochondrial DNA, and 11 supernumerary subunits COX4I, COX5A, COX5B, COX6A, COX6B, COX6C, COX7A, COX7B, COX7C, COX8 and NDUFA4, which are encoded in the nuclear genome. The complex exists as a monomer or a dimer and forms supercomplexes (SCs) in the inner mitochondrial membrane with NADH-ubiquinone oxidoreductase (complex I, CI) and ubiquinol-cytochrome c oxidoreductase (cytochrome b-c1 complex, complex III, CIII), resulting in different assemblies (supercomplex SCI(1)III(2)IV(1) and megacomplex MCI(2)III(2)IV(2)). Found in a complex with TMEM177, COA6, COX18, COX20, SCO1 and SCO2. Interacts with TMEM177 in a COX20-dependent manner. Interacts with COX20. Interacts with COX16. It depends on Cu cation as a cofactor.

The protein resides in the mitochondrion inner membrane. The enzyme catalyses 4 Fe(II)-[cytochrome c] + O2 + 8 H(+)(in) = 4 Fe(III)-[cytochrome c] + 2 H2O + 4 H(+)(out). Functionally, component of the cytochrome c oxidase, the last enzyme in the mitochondrial electron transport chain which drives oxidative phosphorylation. The respiratory chain contains 3 multisubunit complexes succinate dehydrogenase (complex II, CII), ubiquinol-cytochrome c oxidoreductase (cytochrome b-c1 complex, complex III, CIII) and cytochrome c oxidase (complex IV, CIV), that cooperate to transfer electrons derived from NADH and succinate to molecular oxygen, creating an electrochemical gradient over the inner membrane that drives transmembrane transport and the ATP synthase. Cytochrome c oxidase is the component of the respiratory chain that catalyzes the reduction of oxygen to water. Electrons originating from reduced cytochrome c in the intermembrane space (IMS) are transferred via the dinuclear copper A center (CU(A)) of subunit 2 and heme A of subunit 1 to the active site in subunit 1, a binuclear center (BNC) formed by heme A3 and copper B (CU(B)). The BNC reduces molecular oxygen to 2 water molecules using 4 electrons from cytochrome c in the IMS and 4 protons from the mitochondrial matrix. This is Cytochrome c oxidase subunit 2 (MT-CO2) from Niviventer culturatus (Oldfield white-bellied rat).